Consider the following 90-residue polypeptide: DNA-directed RNA polymerase subunit omega (90 aa).

This sequence belongs to the RNA polymerase subunit omega family. The RNAP catalytic core consists of 2 alpha, 1 beta, 1 beta' and 1 omega subunit. When a sigma factor is associated with the core the holoenzyme is formed, which can initiate transcription.

The enzyme catalyses RNA(n) + a ribonucleoside 5'-triphosphate = RNA(n+1) + diphosphate. Functionally, promotes RNA polymerase assembly. Latches the N- and C-terminal regions of the beta' subunit thereby facilitating its interaction with the beta and alpha subunits. The chain is DNA-directed RNA polymerase subunit omega from Saccharophagus degradans (strain 2-40 / ATCC 43961 / DSM 17024).